The following is a 103-amino-acid chain: Large ribosomal subunit protein bL21 (103 aa).

It belongs to the bacterial ribosomal protein bL21 family. Part of the 50S ribosomal subunit. Contacts protein L20.

Functionally, this protein binds to 23S rRNA in the presence of protein L20. The chain is Large ribosomal subunit protein bL21 from Acetivibrio thermocellus (strain ATCC 27405 / DSM 1237 / JCM 9322 / NBRC 103400 / NCIMB 10682 / NRRL B-4536 / VPI 7372) (Clostridium thermocellum).